Here is a 92-residue protein sequence, read N- to C-terminus: Small ribosomal subunit protein uS19 (92 aa).

Belongs to the universal ribosomal protein uS19 family.

Functionally, protein S19 forms a complex with S13 that binds strongly to the 16S ribosomal RNA. The chain is Small ribosomal subunit protein uS19 from Macrococcus caseolyticus (strain JCSC5402) (Macrococcoides caseolyticum).